The following is a 208-amino-acid chain: MVFYFTSSSVNSSAYTIYMGKDKYENEDLIKYGWPEDIWFHVDKLSSAHVYLRLHKGEKIEDIPKEVLMDCAHLVKANSIQGCKMNNVNVVYTPWSNLKKTADMDVGQIGFHRQKDVKIVTVEKKVNEILNRLEKTKMERFPDLEAEKECRDHEERNEKKAQIQEMKRREKEEMKKKREMDELRSYSSLMKVENMSSNQDGNDSDEFM.

Residues 1–105 (MVFYFTSSSV…SNLKKTADMD (105 aa)) are Extracellular-facing. A DNA-binding region spans residues 21 to 25 (KDKYE). At Lys23 the chain carries N6-acetyllysine. The chain crosses the membrane as a helical span at residues 106-122 (VGQIGFHRQKDVKIVTV). A coiled-coil region spans residues 117–187 (VKIVTVEKKV…REMDELRSYS (71 aa)). The Cytoplasmic segment spans residues 123–208 (EKKVNEILNR…QDGNDSDEFM (86 aa)). A compositionally biased stretch (basic and acidic residues) spans 145–184 (EAEKECRDHEERNEKKAQIQEMKRREKEEMKKKREMDELR). Residues 145 to 208 (EAEKECRDHE…QDGNDSDEFM (64 aa)) form a disordered region. Ser204 is subject to Phosphoserine.

Belongs to the CCDC25 family. As to quaternary structure, interacts (via cytoplasmic region) with ILK.

It localises to the cell membrane. It is found in the endomembrane system. In terms of biological role, transmembrane receptor that senses neutrophil extracellular traps (NETs) and triggers the ILK-PARVB pathway to enhance cell motility. NETs are mainly composed of DNA fibers and are released by neutrophils to bind pathogens during inflammation. Formation of NETs is also associated with cancer metastasis, NET-DNA acting as a chemotactic factor to attract cancer cells. Specifically binds NETs on its extracellular region, in particular the 8-OHdG-enriched DNA present in NETs, and recruits ILK, initiating the ILK-PARVB cascade to induce cytoskeleton rearrangement and directional migration of cells. The chain is Coiled-coil domain-containing protein 25 from Bos taurus (Bovine).